Consider the following 257-residue polypeptide: Phosphonates import ATP-binding protein PhnC (257 aa).

The region spanning 7–251 (IQLKDVSKIY…VFTDIYNGGD (245 aa)) is the ABC transporter domain. An ATP-binding site is contributed by 40–47 (GLSGAGKS).

The protein belongs to the ABC transporter superfamily. Phosphonates importer (TC 3.A.1.9.1) family. In terms of assembly, the complex is composed of two ATP-binding proteins (PhnC), two transmembrane proteins (PhnE) and a solute-binding protein (PhnD).

The protein localises to the cell membrane. It carries out the reaction phosphonate(out) + ATP + H2O = phosphonate(in) + ADP + phosphate + H(+). In terms of biological role, part of the ABC transporter complex PhnCDE involved in phosphonates import. Responsible for energy coupling to the transport system. This chain is Phosphonates import ATP-binding protein PhnC, found in Lactobacillus acidophilus (strain ATCC 700396 / NCK56 / N2 / NCFM).